Reading from the N-terminus, the 353-residue chain is Anthranilate phosphoribosyltransferase (353 aa).

5-phospho-alpha-D-ribose 1-diphosphate contacts are provided by residues glycine 79, 82–83 (GD), threonine 87, 89–92 (NIST), 107–115 (KHGNHSFTS), and serine 119. Position 79 (glycine 79) interacts with anthranilate. Serine 91 lines the Mg(2+) pocket. Anthranilate is bound at residue asparagine 110. Arginine 165 contributes to the anthranilate binding site. Aspartate 223 and glutamate 224 together coordinate Mg(2+).

Belongs to the anthranilate phosphoribosyltransferase family. Homodimer. Mg(2+) serves as cofactor.

It carries out the reaction N-(5-phospho-beta-D-ribosyl)anthranilate + diphosphate = 5-phospho-alpha-D-ribose 1-diphosphate + anthranilate. It participates in amino-acid biosynthesis; L-tryptophan biosynthesis; L-tryptophan from chorismate: step 2/5. Catalyzes the transfer of the phosphoribosyl group of 5-phosphorylribose-1-pyrophosphate (PRPP) to anthranilate to yield N-(5'-phosphoribosyl)-anthranilate (PRA). In Methanococcoides burtonii (strain DSM 6242 / NBRC 107633 / OCM 468 / ACE-M), this protein is Anthranilate phosphoribosyltransferase.